Here is a 481-residue protein sequence, read N- to C-terminus: Phloretin 4'-O-glucosyltransferase (481 aa).

H16 serves as the catalytic Proton acceptor. H16 lines the an anthocyanidin pocket. Q354, H369, W372, N373, S374, E377, D393, and Q394 together coordinate UDP-alpha-D-glucose.

This sequence belongs to the UDP-glycosyltransferase family. Highly expressed in young leaves, at intermediate level in mature leaves and at low levels in flowers and fruits.

The enzyme catalyses phloretin + UDP-alpha-D-glucose = trilobatin + UDP + H(+). The catalysed reaction is (2S)-naringenin + UDP-alpha-D-glucose = (2S)-naringenin 7-O-beta-D-glucoside + UDP + H(+). Its function is as follows. Glycosyltransferase that possesses phloretin 4'-O-glycosyltransferase activity. Converts phloretin to trilobatin (phloretin 4'-O-glucoside), a potential antioxidant. Can convert with low efficiency phlorizin and trilobatin to their corresponding di-O-glucosides. Can convert with low efficiency naringenin to naringenin-7-O-glucoside. Can convert with low efficiency quercetin to quercetin-7-O-glucoside. This Malus domestica (Apple) protein is Phloretin 4'-O-glucosyltransferase.